The primary structure comprises 72 residues: VVTIVCLDLGYTLKCNKLVPLFYKTCPAGKNLCYKMYMVATPKVPVKRGCIDVCPKSSLLVKYVCCNTDRCN.

Positions 1-12 (VVTIVCLDLGYT) are cleaved as a signal peptide. 4 disulfide bridges follow: cysteine 15–cysteine 33, cysteine 26–cysteine 50, cysteine 54–cysteine 65, and cysteine 66–cysteine 71.

This sequence belongs to the three-finger toxin family. Short-chain subfamily. Type IA cytotoxin sub-subfamily. As to quaternary structure, monomer in solution; Homodimer and oligomer in the presence of negatively charged lipids forming a pore with a size ranging between 20 and 30 Angstroms. As to expression, expressed by the venom gland.

Its subcellular location is the secreted. Shows cytolytic activity on many different cells by forming a pore in lipid membranes. In vivo, increases heart rate or kills the animal by cardiac arrest. In addition, it binds to heparin with high affinity, interacts with Kv channel-interacting protein 1 (KCNIP1) in a calcium-independent manner, and binds to integrin alpha-V/beta-3 (ITGAV/ITGB3) with moderate affinity. Preferentially binds acidic phospholipids like phosphatidylserine, phosphatidic acid and phosphatidyl glycerol. Has hemolytic activity towards human erythrocytes (EC(50)=0.171 uM) and cytolytic activity towards various cell lines. The polypeptide is Cytotoxin 9 (Naja naja (Indian cobra)).